A 236-amino-acid chain; its full sequence is Ribitol-5-phosphate cytidylyltransferase (236 aa).

CTP-binding positions include 7–10 (LAGG) and 80–86 (GTDRNET).

The protein belongs to the IspD/TarI cytidylyltransferase family. TarI subfamily.

It catalyses the reaction D-ribitol 5-phosphate + CTP + H(+) = CDP-L-ribitol + diphosphate. Its pathway is cell wall biogenesis; poly(ribitol phosphate) teichoic acid biosynthesis. Its function is as follows. Catalyzes the transfer of the cytidylyl group of CTP to D-ribitol 5-phosphate. The polypeptide is Ribitol-5-phosphate cytidylyltransferase (Listeria monocytogenes serovar 1/2a (strain ATCC BAA-679 / EGD-e)).